Consider the following 353-residue polypeptide: uncharacterized protein (353 aa).

The signal sequence occupies residues 1–18 (MKFVLFAQLAAVAAPAIA). Residues 94-119 (EGGNVRRVPGGPSQSARQIGDSSTPM) are disordered. Over residues 105-119 (PSQSARQIGDSSTPM) the composition is skewed to polar residues. N-linked (GlcNAc...) asparagine glycans are attached at residues Asn-165 and Asn-312.

This sequence belongs to the glycosyl hydrolase 3 family.

The protein resides in the secreted. This is an uncharacterized protein from Arthroderma benhamiae (strain ATCC MYA-4681 / CBS 112371) (Trichophyton mentagrophytes).